The sequence spans 363 residues: Spermidine/putrescine import ATP-binding protein PotA 2 (363 aa).

Residues 6-236 (LEIRNVTRRF…PRSRFVADFI (231 aa)) enclose the ABC transporter domain. 38–45 (GPSGCGKT) provides a ligand contact to ATP.

It belongs to the ABC transporter superfamily. Spermidine/putrescine importer (TC 3.A.1.11.1) family. As to quaternary structure, the complex is composed of two ATP-binding proteins (PotA), two transmembrane proteins (PotB and PotC) and a solute-binding protein (PotD).

The protein localises to the cell inner membrane. The enzyme catalyses ATP + H2O + polyamine-[polyamine-binding protein]Side 1 = ADP + phosphate + polyamineSide 2 + [polyamine-binding protein]Side 1.. Its function is as follows. Part of the ABC transporter complex PotABCD involved in spermidine/putrescine import. Responsible for energy coupling to the transport system. The sequence is that of Spermidine/putrescine import ATP-binding protein PotA 2 from Pseudomonas aeruginosa (strain ATCC 15692 / DSM 22644 / CIP 104116 / JCM 14847 / LMG 12228 / 1C / PRS 101 / PAO1).